A 396-amino-acid polypeptide reads, in one-letter code: Elongation factor Tu (396 aa).

One can recognise a tr-type G domain in the interval 10–205 (KSHANIGTIG…AVDEYIPTPE (196 aa)). The G1 stretch occupies residues 19–26 (GHVDHGKT). 19 to 26 (GHVDHGKT) provides a ligand contact to GTP. Residue Thr-26 coordinates Mg(2+). Residues 61-65 (GITIS) are G2. The segment at 82–85 (DCPG) is G3. Residues 82 to 86 (DCPGH) and 137 to 140 (NKCD) each bind GTP. The G4 stretch occupies residues 137–140 (NKCD). The segment at 175-177 (SAL) is G5.

The protein belongs to the TRAFAC class translation factor GTPase superfamily. Classic translation factor GTPase family. EF-Tu/EF-1A subfamily. As to quaternary structure, monomer.

It localises to the cytoplasm. The enzyme catalyses GTP + H2O = GDP + phosphate + H(+). Functionally, GTP hydrolase that promotes the GTP-dependent binding of aminoacyl-tRNA to the A-site of ribosomes during protein biosynthesis. This Bacillus velezensis (strain DSM 23117 / BGSC 10A6 / LMG 26770 / FZB42) (Bacillus amyloliquefaciens subsp. plantarum) protein is Elongation factor Tu.